The primary structure comprises 128 residues: Ribosome-binding factor A (128 aa).

The protein belongs to the RbfA family. As to quaternary structure, monomer. Binds 30S ribosomal subunits, but not 50S ribosomal subunits or 70S ribosomes.

It is found in the cytoplasm. Its function is as follows. One of several proteins that assist in the late maturation steps of the functional core of the 30S ribosomal subunit. Associates with free 30S ribosomal subunits (but not with 30S subunits that are part of 70S ribosomes or polysomes). Required for efficient processing of 16S rRNA. May interact with the 5'-terminal helix region of 16S rRNA. This Rippkaea orientalis (strain PCC 8801 / RF-1) (Cyanothece sp. (strain PCC 8801)) protein is Ribosome-binding factor A.